A 403-amino-acid chain; its full sequence is S-adenosylmethionine synthase (403 aa).

Residue His-16 coordinates ATP. Asp-18 provides a ligand contact to Mg(2+). Glu-44 contacts K(+). L-methionine-binding residues include Glu-57 and Gln-100. Positions 100–110 (QSNDIAQGVDH) are flexible loop. Residues 167–169 (DAK), 238–239 (RF), Asp-247, 253–254 (RK), Ala-270, and Lys-274 contribute to the ATP site. Position 247 (Asp-247) interacts with L-methionine. An L-methionine-binding site is contributed by Lys-278.

This sequence belongs to the AdoMet synthase family. In terms of assembly, homotetramer; dimer of dimers. It depends on Mg(2+) as a cofactor. K(+) serves as cofactor.

It is found in the cytoplasm. It catalyses the reaction L-methionine + ATP + H2O = S-adenosyl-L-methionine + phosphate + diphosphate. The protein operates within amino-acid biosynthesis; S-adenosyl-L-methionine biosynthesis; S-adenosyl-L-methionine from L-methionine: step 1/1. Catalyzes the formation of S-adenosylmethionine (AdoMet) from methionine and ATP. The overall synthetic reaction is composed of two sequential steps, AdoMet formation and the subsequent tripolyphosphate hydrolysis which occurs prior to release of AdoMet from the enzyme. This Verminephrobacter eiseniae (strain EF01-2) protein is S-adenosylmethionine synthase.